Reading from the N-terminus, the 369-residue chain is Phenylalanine--tRNA ligase alpha subunit (369 aa).

E269 lines the Mg(2+) pocket.

It belongs to the class-II aminoacyl-tRNA synthetase family. Phe-tRNA synthetase alpha subunit type 1 subfamily. Tetramer of two alpha and two beta subunits. Mg(2+) serves as cofactor.

It is found in the cytoplasm. The catalysed reaction is tRNA(Phe) + L-phenylalanine + ATP = L-phenylalanyl-tRNA(Phe) + AMP + diphosphate + H(+). This is Phenylalanine--tRNA ligase alpha subunit from Brucella ovis (strain ATCC 25840 / 63/290 / NCTC 10512).